Consider the following 509-residue polypeptide: Activin receptor type-1 (509 aa).

A signal peptide spans 1–20 (MVDGVMILPVLIMIALPSPS). The Extracellular portion of the chain corresponds to 21-123 (MEDEKPKVNP…FPGTQNFHLE (103 aa)). An N-linked (GlcNAc...) asparagine glycan is attached at Asn102. The helical transmembrane segment at 124–146 (VGLIILSVVFAVCLLACLLGVAL) threads the bilayer. Topologically, residues 147–509 (RKFKRRNQER…NSLDKLKTDC (363 aa)) are cytoplasmic. In terms of domain architecture, GS spans 178 to 207 (STLADLLDHSCTSGSGSGLPFLVQRTVARQ). Residues 208–502 (ITLLECVGKG…KTLTKIDNSL (295 aa)) form the Protein kinase domain. ATP is bound by residues 214 to 222 (VGKGRYGEV) and Lys235. Asp336 (proton acceptor) is an active-site residue. Ser501 carries the phosphoserine modification.

The protein belongs to the protein kinase superfamily. TKL Ser/Thr protein kinase family. TGFB receptor subfamily. In terms of assembly, interacts with FKBP1A. Interacts with FCHO1. Interacts with CLU. Interacts with type II receptors AMHR2 and ACVR2A. Interacts with BMP7. Interacts with GDF2/BMP9. Interacts with BMP6 (when glycosylated); the interaction may induce HAMP expression. Interacts with TSC22D1/TSC-22. The cofactor is Mg(2+). Mn(2+) serves as cofactor. As to expression, expressed in normal parenchymal cells, endothelial cells, fibroblasts and tumor-derived epithelial cells.

The protein localises to the membrane. The catalysed reaction is L-threonyl-[receptor-protein] + ATP = O-phospho-L-threonyl-[receptor-protein] + ADP + H(+). It carries out the reaction L-seryl-[receptor-protein] + ATP = O-phospho-L-seryl-[receptor-protein] + ADP + H(+). Functionally, bone morphogenetic protein (BMP) type I receptor that is involved in a wide variety of biological processes, including bone, heart, cartilage, nervous, and reproductive system development and regulation. As a type I receptor, forms heterotetrameric receptor complexes with the type II receptors AMHR2, ACVR2A or ACVR2B. Upon binding of ligands such as BMP7 or GDF2/BMP9 to the heteromeric complexes, type II receptors transphosphorylate ACVR1 intracellular domain. In turn, ACVR1 kinase domain is activated and subsequently phosphorylates SMAD1/5/8 proteins that transduce the signal. In addition to its role in mediating BMP pathway-specific signaling, suppresses TGFbeta/activin pathway signaling by interfering with the binding of activin to its type II receptor. Besides canonical SMAD signaling, can activate non-canonical pathways such as p38 mitogen-activated protein kinases/MAPKs. May promote the expression of HAMP, potentially via its interaction with BMP6. This chain is Activin receptor type-1 (ACVR1), found in Homo sapiens (Human).